The following is a 548-amino-acid chain: MAKFMTPVIQDNPSGWGPCAVPEQFRDMPYQPFSKGDRLGKVADWTGATYQDKRYTNKYSSQFGGGSQYAYFHEEDESSFQLVDTARTQKTAYQRNRMRFAQRNLRRDKDRRNMLQFNLQILPKSAKQKERERIRLQKKFQKQFGVRQKWDQKSQKPRDSSVEVRSDWEVKEEMDFPQLMKMRYLEVSEPQDIECCGALEYYDKAFDRITTRSEKPLRSIKRIFHTVTTTDDPVIRKLAKTQGNVFATDAILATLMSCTRSVYSWDIVVQRVGSKLFFDKRDNSDFDLLTVSETANEPPQDEGNSFNSPRNLAMEATYINHNFSQQCLRMGKERYNFPNPNPFVEDDMDKNEIASVAYRYRRWKLGDDIDLIVRCEHDGVMTGANGEVSFINIKTLNEWDSRHCNGVDWRQKLDSQRGAVIATELKNNSYKLARWTCCALLAGSEYLKLGYVSRYHVKDSSRHVILGTQQFKPNEFASQINLSVENAWGILRCVIDICMKLEEGKYLILKDPNKQVIRVYSLPDGTFSSDEDEEEEEEEEEEEEEEET.

Position 53 is an N6-acetyllysine (Lys-53). Ser-161 is subject to Phosphoserine. The RNA gate stretch occupies residues 285 to 299 (DFDLLTVSETANEPP). The interval 523–548 (PDGTFSSDEDEEEEEEEEEEEEEEET) is disordered. Residues Ser-528 and Ser-529 each carry the phosphoserine modification. A compositionally biased stretch (acidic residues) spans 529-548 (SDEDEEEEEEEEEEEEEEET).

This sequence belongs to the eIF-3 subunit D family. Component of the eukaryotic translation initiation factor 3 (eIF-3) complex, which is composed of 13 subunits: EIF3A, EIF3B, EIF3C, EIF3D, EIF3E, EIF3F, EIF3G, EIF3H, EIF3I, EIF3J, EIF3K, EIF3L and EIF3M. The eIF-3 complex appears to include 3 stable modules: module A is composed of EIF3A, EIF3B, EIF3G and EIF3I; module B is composed of EIF3F, EIF3H, and EIF3M; and module C is composed of EIF3C, EIF3D, EIF3E, EIF3K and EIF3L. EIF3C of module C binds EIF3B of module A and EIF3H of module B, thereby linking the three modules. EIF3J is a labile subunit that binds to the eIF-3 complex via EIF3B. The eIF-3 complex interacts with RPS6KB1 under conditions of nutrient depletion. Mitogenic stimulation leads to binding and activation of a complex composed of MTOR and RPTOR, leading to phosphorylation and release of RPS6KB1 and binding of EIF4B to eIF-3. As to quaternary structure, (Microbial infection) Interacts with Norwalk virus VPg protein.

The protein resides in the cytoplasm. MRNA cap-binding component of the eukaryotic translation initiation factor 3 (eIF-3) complex, a complex required for several steps in the initiation of protein synthesis of a specialized repertoire of mRNAs. The eIF-3 complex associates with the 40S ribosome and facilitates the recruitment of eIF-1, eIF-1A, eIF-2:GTP:methionyl-tRNAi and eIF-5 to form the 43S pre-initiation complex (43S PIC). The eIF-3 complex stimulates mRNA recruitment to the 43S PIC and scanning of the mRNA for AUG recognition. The eIF-3 complex is also required for disassembly and recycling of post-termination ribosomal complexes and subsequently prevents premature joining of the 40S and 60S ribosomal subunits prior to initiation. The eIF-3 complex specifically targets and initiates translation of a subset of mRNAs involved in cell proliferation, including cell cycling, differentiation and apoptosis, and uses different modes of RNA stem-loop binding to exert either translational activation or repression. In the eIF-3 complex, EIF3D specifically recognizes and binds the 7-methylguanosine cap of a subset of mRNAs. In terms of biological role, (Microbial infection) In case of FCV infection, plays a role in the ribosomal termination-reinitiation event leading to the translation of VP2. In Homo sapiens (Human), this protein is Eukaryotic translation initiation factor 3 subunit D.